Here is a 203-residue protein sequence, read N- to C-terminus: ATP-dependent Clp protease proteolytic subunit (203 aa).

S100 serves as the catalytic Nucleophile. The active site involves H125.

The protein belongs to the peptidase S14 family. As to quaternary structure, fourteen ClpP subunits assemble into 2 heptameric rings which stack back to back to give a disk-like structure with a central cavity, resembling the structure of eukaryotic proteasomes.

The protein localises to the cytoplasm. It carries out the reaction Hydrolysis of proteins to small peptides in the presence of ATP and magnesium. alpha-casein is the usual test substrate. In the absence of ATP, only oligopeptides shorter than five residues are hydrolyzed (such as succinyl-Leu-Tyr-|-NHMec, and Leu-Tyr-Leu-|-Tyr-Trp, in which cleavage of the -Tyr-|-Leu- and -Tyr-|-Trp bonds also occurs).. Functionally, cleaves peptides in various proteins in a process that requires ATP hydrolysis. Has a chymotrypsin-like activity. Plays a major role in the degradation of misfolded proteins. The polypeptide is ATP-dependent Clp protease proteolytic subunit (Anaeromyxobacter dehalogenans (strain 2CP-1 / ATCC BAA-258)).